The primary structure comprises 77 residues: Conotoxin ArMKLT2-0122 (77 aa).

The signal sequence occupies residues 1-22 (MKLTCVLIVAVLFLTACQLIAA). Positions 23–44 (DDSRDLKRFSRRKMRDGMLNTK) are excised as a propeptide. Cystine bridges form between cysteine 50–cysteine 65, cysteine 57–cysteine 68, and cysteine 64–cysteine 73.

Belongs to the conotoxin O1 superfamily. As to expression, expressed by the venom duct.

Its subcellular location is the secreted. The protein is Conotoxin ArMKLT2-0122 of Conus arenatus (Sand-dusted cone).